The following is a 330-amino-acid chain: Small ribosomal subunit protein uS2 (330 aa).

The protein belongs to the universal ribosomal protein uS2 family.

This Rhodopseudomonas palustris (strain BisA53) protein is Small ribosomal subunit protein uS2.